The following is a 226-amino-acid chain: Uracil-DNA glycosylase (226 aa).

Catalysis depends on aspartate 65, which acts as the Proton acceptor.

The protein belongs to the uracil-DNA glycosylase (UDG) superfamily. UNG family.

It is found in the cytoplasm. The enzyme catalyses Hydrolyzes single-stranded DNA or mismatched double-stranded DNA and polynucleotides, releasing free uracil.. In terms of biological role, excises uracil residues from the DNA which can arise as a result of misincorporation of dUMP residues by DNA polymerase or due to deamination of cytosine. The protein is Uracil-DNA glycosylase of Enterococcus faecalis (strain ATCC 700802 / V583).